The chain runs to 485 residues: Glutamyl-tRNA(Gln) amidotransferase subunit A (485 aa).

Active-site charge relay system residues include Lys78 and Ser153. The Acyl-ester intermediate role is filled by Ser177.

This sequence belongs to the amidase family. GatA subfamily. In terms of assembly, heterotrimer of A, B and C subunits.

It carries out the reaction L-glutamyl-tRNA(Gln) + L-glutamine + ATP + H2O = L-glutaminyl-tRNA(Gln) + L-glutamate + ADP + phosphate + H(+). In terms of biological role, allows the formation of correctly charged Gln-tRNA(Gln) through the transamidation of misacylated Glu-tRNA(Gln) in organisms which lack glutaminyl-tRNA synthetase. The reaction takes place in the presence of glutamine and ATP through an activated gamma-phospho-Glu-tRNA(Gln). The polypeptide is Glutamyl-tRNA(Gln) amidotransferase subunit A (Bacillus cytotoxicus (strain DSM 22905 / CIP 110041 / 391-98 / NVH 391-98)).